The sequence spans 238 residues: uncharacterized protein (238 aa).

Disordered stretches follow at residues 1 to 51 (MPCT…ASCA) and 214 to 238 (ITVE…FPTA). Over residues 16-31 (ATWRTARPAPRRCGSC) the composition is skewed to low complexity.

This is an uncharacterized protein from Streptomyces griseus.